A 167-amino-acid polypeptide reads, in one-letter code: MKGLCVAACTLVLAAATPLTPRENTCTQGSKTPYGALTHSACPCWNWYEIQTGDGDCGKVASKFGVSREDVIRVEPGRVTPPNPLPTPPCNAADAPYPVGKGTVCGCKKWYRIRRGDDCGPVASEFGISADQLIEWNPWLSADVDGTHYPCMNIWPTDNLCVDVSSF.

An N-terminal signal peptide occupies residues 1 to 16 (MKGLCVAACTLVLAAA). The LysM domain occupies 109 to 162 (KWYRIRRGDDCGPVASEFGISADQLIEWNPWLSADVDGTHYPCMNIWPTDNLCV).

Belongs to the secreted LysM effector family.

Its function is as follows. Might have a role in sequestration of chitin oligosaccharides (breakdown products of fungal cell walls that are released during invasion and act as triggers of host immunity) to dampen host defense. The protein is Secreted LysM effector Blys6 of Beauveria bassiana (strain ARSEF 2860) (White muscardine disease fungus).